Consider the following 270-residue polypeptide: Protein FAM110D (270 aa).

Low complexity predominate over residues Met1–Ser16. 3 disordered regions span residues Met1–Ser83, Arg117–Ala142, and Pro186–Val244. Residues Arg68–Leu78 are compositionally biased toward basic residues.

It belongs to the FAM110 family.

In Bos taurus (Bovine), this protein is Protein FAM110D (FAM110D).